Here is a 316-residue protein sequence, read N- to C-terminus: 4-hydroxyphenylacetate decarboxylase activating enzyme (316 aa).

The region spanning 20 to 307 (HDGPGCRTTV…QDIFLDNGIA (288 aa)) is the Radical SAM core domain. The [4Fe-4S] cluster site is built by C34, C38, C41, C60, C66, C69, and C105. Position 40–42 (40–42 (WCA)) interacts with S-adenosyl-L-methionine. Positions 84-115 (NKPVIDWNICKDCESFECVNSCYYNAFKLCAK) constitute a 4Fe-4S ferredoxin-type domain. Residues G144, 193-195 (DIK), and H267 each bind S-adenosyl-L-methionine.

This sequence belongs to the organic radical-activating enzymes family. As to quaternary structure, monomer. It depends on [4Fe-4S] cluster as a cofactor.

It catalyses the reaction glycyl-[protein] + reduced [flavodoxin] + S-adenosyl-L-methionine = glycin-2-yl radical-[protein] + semiquinone [flavodoxin] + 5'-deoxyadenosine + L-methionine + H(+). Its function is as follows. Catalyzes activation of 4-hydroxyphenylacetate decarboxylase under anaerobic conditions by generation of an organic free radical on a glycine residue, via a homolytic cleavage of S-adenosyl-L-methionine (SAM). This Clostridioides difficile (strain 630) (Peptoclostridium difficile) protein is 4-hydroxyphenylacetate decarboxylase activating enzyme.